Consider the following 114-residue polypeptide: MNLIESINAAQLRTDIPDFRPGDTVRVHAKVVEGTRERIQMFEGVVIARKNSGINETYTVRKISNGVGVERIFPVHTPRVEQIEVIRHGKVRRAKLYYLRALTGKKARIAERRR.

The protein belongs to the bacterial ribosomal protein bL19 family.

Its function is as follows. This protein is located at the 30S-50S ribosomal subunit interface and may play a role in the structure and function of the aminoacyl-tRNA binding site. The polypeptide is Large ribosomal subunit protein bL19 (Lactococcus lactis subsp. lactis (strain IL1403) (Streptococcus lactis)).